Consider the following 361-residue polypeptide: Chorismate synthase (361 aa).

Arginine 47 contacts NADP(+). FMN contacts are provided by residues 124-126 (RAS), glycine 286, 301-305 (KPTAT), and arginine 327.

It belongs to the chorismate synthase family. Homotetramer. FMNH2 is required as a cofactor.

It catalyses the reaction 5-O-(1-carboxyvinyl)-3-phosphoshikimate = chorismate + phosphate. It participates in metabolic intermediate biosynthesis; chorismate biosynthesis; chorismate from D-erythrose 4-phosphate and phosphoenolpyruvate: step 7/7. In terms of biological role, catalyzes the anti-1,4-elimination of the C-3 phosphate and the C-6 proR hydrogen from 5-enolpyruvylshikimate-3-phosphate (EPSP) to yield chorismate, which is the branch point compound that serves as the starting substrate for the three terminal pathways of aromatic amino acid biosynthesis. This reaction introduces a second double bond into the aromatic ring system. This is Chorismate synthase from Akkermansia muciniphila (strain ATCC BAA-835 / DSM 22959 / JCM 33894 / BCRC 81048 / CCUG 64013 / CIP 107961 / Muc).